The sequence spans 1710 residues: Phosphatidylinositol 4-phosphate 5-kinase (1710 aa).

The 31-residue stretch at 68–98 (YKSIFKAFDLNNDNYLDFYEFCVAINIMLKG) folds into the EF-hand domain. 5 residues coordinate Ca(2+): Asp-76, Asn-78, Asp-80, Tyr-82, and Glu-87. Disordered regions lie at residues 139–255 (NNMN…DPIN), 427–479 (KQKK…IKSV), and 895–993 (GEGH…HNNN). The span at 140 to 235 (NMNGDNINGD…HNNNSHNNNN (96 aa)) shows a compositional bias: low complexity. Residues 236-248 (KAENSLGQPLNEK) show a composition bias toward polar residues. Basic residues predominate over residues 427–444 (KQKKKKKKKKKKKKKKEK). The span at 456–468 (SSSMENKSQNKSQ) shows a compositional bias: low complexity. Residues 902–973 (EEEEKNDDEE…DDNDDNDDND (72 aa)) show a composition bias toward acidic residues. Over residues 974–987 (EKSNIKIENKKDVP) the composition is skewed to basic and acidic residues. The PIPK domain maps to 1334-1709 (QKKTFHRILA…RFVTFIENHM (376 aa)).

The enzyme catalyses a 1,2-diacyl-sn-glycero-3-phospho-(1D-myo-inositol 4-phosphate) + ATP = a 1,2-diacyl-sn-glycero-3-phospho-(1D-myo-inositol-4,5-bisphosphate) + ADP + H(+). Catalytic activity is increase by myristoylated ARF1. Phosphatidic acid has no effect on catalytic activity. Its function is as follows. Catalyzes the phosphorylation of phosphatidylinositol 4-phosphate (PtdIns(4)P/PI4P) to form phosphatidylinositol 4,5-bisphosphate (PtdIns(4,5)P2/PIP2), a lipid second messenger that regulates several cellular processes. This is Phosphatidylinositol 4-phosphate 5-kinase from Plasmodium falciparum (isolate 3D7).